The sequence spans 275 residues: Large ribosomal subunit protein uL2 (275 aa).

The tract at residues 221-275 (RGMTMNPVDHPMGGGEGRSKGHIPQSPWGIPAKGYKTRKSKKPSDKLIVKRRKQK) is disordered.

Belongs to the universal ribosomal protein uL2 family. Part of the 50S ribosomal subunit. Forms a bridge to the 30S subunit in the 70S ribosome.

In terms of biological role, one of the primary rRNA binding proteins. Required for association of the 30S and 50S subunits to form the 70S ribosome, for tRNA binding and peptide bond formation. It has been suggested to have peptidyltransferase activity; this is somewhat controversial. Makes several contacts with the 16S rRNA in the 70S ribosome. The sequence is that of Large ribosomal subunit protein uL2 from Kosmotoga olearia (strain ATCC BAA-1733 / DSM 21960 / TBF 19.5.1).